Here is a 411-residue protein sequence, read N- to C-terminus: Carbohydrate sulfotransferase 5 (411 aa).

Residues 1-30 (MGMRARVPKVAHSTRRPPAARMWLPRFSSK) lie on the Cytoplasmic side of the membrane. The chain crosses the membrane as a helical; Signal-anchor for type II membrane protein span at residues 31-48 (TVTVLLLAQTTCLLLFII). Topologically, residues 49 to 411 (SRPGPSSPAG…PDHFSWASPD (363 aa)) are lumenal. 71–77 (WRSGSSF) provides a ligand contact to 3'-phosphoadenylyl sulfate. The N-linked (GlcNAc...) asparagine glycan is linked to N138. 224 to 232 (RDPRAVLRS) lines the 3'-phosphoadenylyl sulfate pocket. N327 and N350 each carry an N-linked (GlcNAc...) asparagine glycan.

The protein belongs to the sulfotransferase 1 family. Gal/GlcNAc/GalNAc subfamily. As to expression, predominantly expressed in small and large intestines and colon. Weakly expressed in lymphocytes. Not expressed in other tissues. Down-regulated in colonic adenocarcinomas.

Its subcellular location is the golgi apparatus membrane. Its function is as follows. Sulfotransferase that utilizes 3'-phospho-5'-adenylyl sulfate (PAPS) as sulfonate donor to catalyze the transfer of sulfate to position 6 of non-reducing N-acetylglucosamine (GlcNAc) residues and O-linked sugars of mucin-type acceptors. Acts on the non-reducing terminal GlcNAc of short carbohydrate substrates. However, it does not transfer sulfate to longer carbohydrate substrates that have poly-N-acetyllactosamine structures. Has no activity toward keratan. Not involved in generating HEV-expressed ligands for SELL. Its substrate specificity may be influenced by its subcellular location. This chain is Carbohydrate sulfotransferase 5 (CHST5), found in Homo sapiens (Human).